Consider the following 495-residue polypeptide: UDP-N-acetylmuramoyl-L-alanyl-D-glutamate--2,6-diaminopimelate ligase (495 aa).

Residues L27, S29, and 44 to 46 (HQA) each bind UDP-N-acetyl-alpha-D-muramoyl-L-alanyl-D-glutamate. 116-122 (GTNGKTT) contacts ATP. Residues N157, 158-159 (TT), S185, Q191, and R193 each bind UDP-N-acetyl-alpha-D-muramoyl-L-alanyl-D-glutamate. Residue K225 is modified to N6-carboxylysine. Residues R390, 414–417 (DNPR), G465, and E469 contribute to the meso-2,6-diaminopimelate site. The Meso-diaminopimelate recognition motif motif lies at 414 to 417 (DNPR).

Belongs to the MurCDEF family. MurE subfamily. Mg(2+) is required as a cofactor. Carboxylation is probably crucial for Mg(2+) binding and, consequently, for the gamma-phosphate positioning of ATP.

It localises to the cytoplasm. It catalyses the reaction UDP-N-acetyl-alpha-D-muramoyl-L-alanyl-D-glutamate + meso-2,6-diaminopimelate + ATP = UDP-N-acetyl-alpha-D-muramoyl-L-alanyl-gamma-D-glutamyl-meso-2,6-diaminopimelate + ADP + phosphate + H(+). It functions in the pathway cell wall biogenesis; peptidoglycan biosynthesis. In terms of biological role, catalyzes the addition of meso-diaminopimelic acid to the nucleotide precursor UDP-N-acetylmuramoyl-L-alanyl-D-glutamate (UMAG) in the biosynthesis of bacterial cell-wall peptidoglycan. This Escherichia coli O157:H7 protein is UDP-N-acetylmuramoyl-L-alanyl-D-glutamate--2,6-diaminopimelate ligase.